The chain runs to 492 residues: Proline--tRNA ligase (492 aa).

The protein belongs to the class-II aminoacyl-tRNA synthetase family. ProS type 3 subfamily. Homodimer.

It localises to the cytoplasm. It carries out the reaction tRNA(Pro) + L-proline + ATP = L-prolyl-tRNA(Pro) + AMP + diphosphate. Functionally, catalyzes the attachment of proline to tRNA(Pro) in a two-step reaction: proline is first activated by ATP to form Pro-AMP and then transferred to the acceptor end of tRNA(Pro). This Flavobacterium psychrophilum (strain ATCC 49511 / DSM 21280 / CIP 103535 / JIP02/86) protein is Proline--tRNA ligase.